Here is a 278-residue protein sequence, read N- to C-terminus: Digeranylgeranylglyceryl phosphate synthase (278 aa).

8 consecutive transmembrane segments (helical) span residues 15 to 35, 36 to 56, 89 to 109, 133 to 153, 159 to 179, 203 to 223, 225 to 245, and 258 to 278; these read VIGS…WKIV, PIKL…GYII, IVLF…AFII, LIVA…FFEG, TLIP…VKGI, WFIS…PYFF, FNII…LVVL, and AYMK…TLPI.

The protein belongs to the UbiA prenyltransferase family. DGGGP synthase subfamily. Requires Mg(2+) as cofactor.

It localises to the cell membrane. The enzyme catalyses sn-3-O-(geranylgeranyl)glycerol 1-phosphate + (2E,6E,10E)-geranylgeranyl diphosphate = 2,3-bis-O-(geranylgeranyl)-sn-glycerol 1-phosphate + diphosphate. The protein operates within membrane lipid metabolism; glycerophospholipid metabolism. Prenyltransferase that catalyzes the transfer of the geranylgeranyl moiety of geranylgeranyl diphosphate (GGPP) to the C2 hydroxyl of (S)-3-O-geranylgeranylglyceryl phosphate (GGGP). This reaction is the second ether-bond-formation step in the biosynthesis of archaeal membrane lipids. The protein is Digeranylgeranylglyceryl phosphate synthase of Sulfurisphaera tokodaii (strain DSM 16993 / JCM 10545 / NBRC 100140 / 7) (Sulfolobus tokodaii).